The primary structure comprises 164 residues: FMN reductase (NADH) RutF (164 aa).

It belongs to the non-flavoprotein flavin reductase family. RutF subfamily.

The catalysed reaction is FMNH2 + NAD(+) = FMN + NADH + 2 H(+). Functionally, catalyzes the reduction of FMN to FMNH2 which is used to reduce pyrimidine by RutA via the Rut pathway. In Escherichia coli O6:K15:H31 (strain 536 / UPEC), this protein is FMN reductase (NADH) RutF.